Reading from the N-terminus, the 152-residue chain is Transcriptional regulator MraZ (152 aa).

2 SpoVT-AbrB domains span residues 5 to 52 (ASAI…PFDE) and 81 to 124 (AHEC…DETA).

This sequence belongs to the MraZ family. In terms of assembly, forms oligomers.

The protein resides in the cytoplasm. It localises to the nucleoid. In Shewanella sediminis (strain HAW-EB3), this protein is Transcriptional regulator MraZ.